A 510-amino-acid chain; its full sequence is 2,3-bisphosphoglycerate-independent phosphoglycerate mutase (510 aa).

The Mn(2+) site is built by D12 and S62. S62 functions as the Phosphoserine intermediate in the catalytic mechanism. Residues H123, 153–154 (RD), R185, R191, 260–263 (RPDR), and K333 each bind substrate. 5 residues coordinate Mn(2+): D400, H404, D441, H442, and H460.

The protein belongs to the BPG-independent phosphoglycerate mutase family. In terms of assembly, monomer. The cofactor is Mn(2+).

It carries out the reaction (2R)-2-phosphoglycerate = (2R)-3-phosphoglycerate. It functions in the pathway carbohydrate degradation; glycolysis; pyruvate from D-glyceraldehyde 3-phosphate: step 3/5. In terms of biological role, catalyzes the interconversion of 2-phosphoglycerate and 3-phosphoglycerate. The protein is 2,3-bisphosphoglycerate-independent phosphoglycerate mutase of Clostridium acetobutylicum (strain ATCC 824 / DSM 792 / JCM 1419 / IAM 19013 / LMG 5710 / NBRC 13948 / NRRL B-527 / VKM B-1787 / 2291 / W).